An 82-amino-acid chain; its full sequence is Transcription elongation factor 1 homolog (82 aa).

Residues Cys26, Cys29, Cys50, and Cys53 each contribute to the Zn(2+) site.

Belongs to the ELOF1 family.

The protein localises to the nucleus. Functionally, transcription elongation factor implicated in the maintenance of proper chromatin structure in actively transcribed regions. This is Transcription elongation factor 1 homolog from Drosophila melanogaster (Fruit fly).